The following is a 372-amino-acid chain: Germination protease (372 aa).

A propeptide spanning residues 1–15 (MVKELNLEQYNVRTD) is cleaved from the precursor.

The protein belongs to the peptidase A25 family. As to quaternary structure, homotetramer. Post-translationally, autoproteolytically processed. The inactive tetrameric zymogen termed p46 autoprocesses to a smaller form termed p41, which is active only during spore germination.

The enzyme catalyses Endopeptidase action with P4 Glu or Asp, P1 preferably Glu &gt; Asp, P1' hydrophobic and P2' Ala.. Initiates the rapid degradation of small, acid-soluble proteins during spore germination. The polypeptide is Germination protease (Halalkalibacterium halodurans (strain ATCC BAA-125 / DSM 18197 / FERM 7344 / JCM 9153 / C-125) (Bacillus halodurans)).